Consider the following 569-residue polypeptide: MATEGGGKEMNEIKTQFTTREGLYKLLPHSEYSRPNRVPFNSQGSNPVRVSFVNLNDQSGNGDRLCFNVGRELYFYIYKGVRKAADLSKPIDKRIYKGTQPTCHDFNHLTATAESVSLLVGFSAGQVQLIDPIKKETSKLFNEERLIDKSRVTCVKWVPGSESLFLVAHSSGNMYLYNVEHTCGTTAPHYQLLKQGESFAVHTCKSKSTRNPLLKWTVGEGALNEFAFSPDGKFLACVSQDGFLRVFNFDSVELHGTMKSYFGGLLCVCWSPDGKYIVTGGEDDLVTVWSFVDCRVIARGHGHKSWVSVVAFDPYTTSVEEGDPMEFSGSDEDFQDLLHFGRDRANSTQSRLSKRNSTDSRPVSVTYRFGSVGQDTQLCLWDLTEDILFPHQPLSRARTHTNVMNATSPPAGSNGNSVTTPGNSVPPPLPRSNSLPHSAVSNAGSKSSVMDGAIASGVSKFATLSLHDRKERHHEKDHKRNHSMGHISSKSSDKLNLVTKTKTDPAKTLGTPLCPRMEDVPLLEPLICKKIAHERLTVLIFLEDCIVTACQEGFICTWGRPGKVVSFNP.

Residue Ala-2 is modified to N-acetylalanine. 7 WD repeats span residues 94–138 (RIYK…KETS), 139–210 (KLFN…KSTR), 211–252 (NPLL…FDSV), 253–331 (ELHG…SGSD), 332–426 (EDFQ…NSVP), 427–523 (PPLP…VPLL), and 524–559 (EPLI…CTWG). Phosphoserine occurs at positions 357 and 360. Polar residues-rich tracts occupy residues 405 to 423 (NATS…TPGN) and 431 to 445 (RSNS…NAGS). Positions 405–445 (NATSPPAGSNGNSVTTPGNSVPPPLPRSNSLPHSAVSNAGS) are disordered. A phosphoserine mark is found at Ser-432, Ser-434, and Ser-465. Residues 450–468 (MDGAIASGVSKFATLSLHD) are mediates XPO1-dependent nuclear export of WDR20-USP12 complexes.

In terms of assembly, interacts with USP12; promotes translocation of USP12/WDR20 to the plasma membrane. Component of the USP12/WDR20/WDR48 deubiquitinating complex. Interacts with USP46; contributes to the cytoplasmic localization of the USP46/WDR20 complex. Component of the USP12/DMWD/WDR48 deubiquitinating complex.

It is found in the cytoplasm. The protein localises to the nucleus. In terms of biological role, regulator of deubiquitinating complexes. Activates deubiquitinating activity of complexes containing USP12. Anchors at the base of the ubiquitin-contacting loop of USP12 and remotely modulates the catalytic center of the enzyme. Regulates shuttling of the USP12 deubiquitinase complex between the plasma membrane, cytoplasm and nucleus. In Homo sapiens (Human), this protein is WD repeat-containing protein 20 (WDR20).